Here is an 876-residue protein sequence, read N- to C-terminus: MTGNELRARFLKFFEDRGHTVVPSSLLIPHNDPTLLFANAGMNQFKDCFLGMEDRGYTRATSSQKCVRAGGKHNDLENVGRTARHHTFFEMLGNFSFGDYFKKEAIAFAWEFLTKDLGLDKDRLYVTVYTDDDEAADIWHHQEGVPRERIFRFGEKDNFWSMGDTGPCGPCSEIFWDNGPEVGCGSPDCTVGCDCDRYMEIWNNVFMQFNRSADGTMTPLPKPSVDTGMGLERICTVMQGVKSNYDTDLLQGVIRHVERLSGKRYRENEKDDVSMRVIADHARATTFLICDGVLPSNEGRGYVLRRIMRRAARHAKMLGFAEPVLYRTVDAVNEMMGGSYPELLEREEYIKKVIRAEEERFAETLDRGLAILNDAVAQLKGEGKTVIPGETLFRLYDTFGFPTDLTADIVRAEGFTIDEPGFEACMGRQREQAREHWKGSGEEGIAAVHKELHNRGVRSVFVGYDEKCSYAAIGSILRGGSEVAEAKAGEDVEIITDRTPFYGESGGQAGDTGTISTGSAHVRVTGTIRPYPDLIVHRGTVVEGTIKTGEACDLKVASVDRDATARNHTATHLLQTALRRVLGEHVKQAGSLVAPDRLRFDFTHFAAMTPEEIRRVEEIVNTFIMENDTVHAREMAVEEAMESGATALFGEKYGDRVRVVKVGEVSAELCGGTHVRAAGDIGSFKILSEAGIAAGVRRIEALTGMGALRHIQELEDEKRQIAALMKAEGGDNIDRLQKLLARQREMQREIETLQGQLNAAKSGDLLADVREVNGVKVLATKVEVDDPKKLRELADTLKDRLGSGVVALGCEKDGRANLLVAVTKDLAGRIRAGDIIRQLAPVIGGSGGGKPELAQAGGSQPDMLAEALGKVYGLIG.

Zn(2+)-binding residues include histidine 568, histidine 572, cysteine 670, and histidine 674.

The protein belongs to the class-II aminoacyl-tRNA synthetase family. It depends on Zn(2+) as a cofactor.

The protein localises to the cytoplasm. The enzyme catalyses tRNA(Ala) + L-alanine + ATP = L-alanyl-tRNA(Ala) + AMP + diphosphate. In terms of biological role, catalyzes the attachment of alanine to tRNA(Ala) in a two-step reaction: alanine is first activated by ATP to form Ala-AMP and then transferred to the acceptor end of tRNA(Ala). Also edits incorrectly charged Ser-tRNA(Ala) and Gly-tRNA(Ala) via its editing domain. The chain is Alanine--tRNA ligase from Geobacter metallireducens (strain ATCC 53774 / DSM 7210 / GS-15).